We begin with the raw amino-acid sequence, 266 residues long: MAYDLKKESDVKEYVEKLGVEYRFGCYSEKKPEACHLLGDYLEGIKKDFEKASKVYKSTCDDYGYAKSCYKYGNYSFLGKGKSGSKGNPQVAYEYYEKGCNLNDSDACLHSGLLLVSKSMPREIDWNVPKGLEFLTKSCDLNNATACFYLSGMHISGVQKKADQSAVTASSGSGTSSPPAGQPPLKDSDYIVLKDMKKAFQFAHKACELRNMYACANLSQMYARGDGIEKNEKEAEKYKKLALEMQDEVKKQHDTLGFQQGVGMPN.

2 Sel1-like repeats span residues 32 to 64 and 66 to 104; these read PEAC…DDYG and AKSC…NLND. Residues 166–179 show a composition bias toward low complexity; it reads AVTASSGSGTSSPP. Residues 166 to 187 form a disordered region; it reads AVTASSGSGTSSPPAGQPPLKD. One copy of the Sel1-like 3 repeat lies at 212 to 247; it reads MYACANLSQMYARGDGIEKNEKEAEKYKKLALEMQD.

This sequence belongs to the hcp beta-lactamase family.

Its function is as follows. Required for locomotion. Probably involved in the regulation of formation/maintenance of motor neurons at presynaptic terminals at the neuromuscular junction. This Drosophila melanogaster (Fruit fly) protein is Cytochrome c oxidase assembly factor 7 homolog.